The chain runs to 341 residues: S-adenosylmethionine:tRNA ribosyltransferase-isomerase (341 aa).

It belongs to the QueA family. In terms of assembly, monomer.

It is found in the cytoplasm. It carries out the reaction 7-aminomethyl-7-carbaguanosine(34) in tRNA + S-adenosyl-L-methionine = epoxyqueuosine(34) in tRNA + adenine + L-methionine + 2 H(+). It functions in the pathway tRNA modification; tRNA-queuosine biosynthesis. Its function is as follows. Transfers and isomerizes the ribose moiety from AdoMet to the 7-aminomethyl group of 7-deazaguanine (preQ1-tRNA) to give epoxyqueuosine (oQ-tRNA). This chain is S-adenosylmethionine:tRNA ribosyltransferase-isomerase, found in Citrifermentans bemidjiense (strain ATCC BAA-1014 / DSM 16622 / JCM 12645 / Bem) (Geobacter bemidjiensis).